Consider the following 396-residue polypeptide: Probable glucan endo-1,6-beta-glucosidase B (396 aa).

Residues 1 to 17 (MIRRLAAFSALSGLATA) form the signal peptide. The N-linked (GlcNAc...) asparagine glycan is linked to Asn30. The active-site Proton donor is the Glu219. N-linked (GlcNAc...) asparagine glycosylation occurs at Asn272. Glu320 (nucleophile) is an active-site residue.

This sequence belongs to the glycosyl hydrolase 5 (cellulase A) family.

The protein resides in the secreted. It carries out the reaction Random hydrolysis of (1-&gt;6)-linkages in (1-&gt;6)-beta-D-glucans.. Beta-glucanases participate in the metabolism of beta-glucan, the main structural component of the cell wall. Acts on lutean, pustulan and 1,6-oligo-beta-D-glucosides. The chain is Probable glucan endo-1,6-beta-glucosidase B (exgB) from Aspergillus fumigatus (strain ATCC MYA-4609 / CBS 101355 / FGSC A1100 / Af293) (Neosartorya fumigata).